A 611-amino-acid chain; its full sequence is Mitochondrial distribution and morphology protein 34 (611 aa).

The SMP-LTD domain occupies 1–195 (MAFNFNWSPL…LPAIIHRLSL (195 aa)). Positions 325–342 (SAPLSSQDTASVASSQSR) are enriched in polar residues. Disordered regions lie at residues 325-347 (SAPL…GLPS), 361-402 (RHSK…STIT), 415-544 (SIIP…PTYT), and 587-611 (SYVG…AYRH). The segment covering 361–373 (RHSKAHARKRKKR) has biased composition (basic residues). Composition is skewed to basic and acidic residues over residues 374–385 (VIDLRPHRKPTD) and 444–459 (TLRD…ERTN). The span at 520-529 (PLGPPAPAPI) shows a compositional bias: pro residues.

Belongs to the MDM34 family. In terms of assembly, component of the ER-mitochondria encounter structure (ERMES) or MDM complex, composed of MMM1, MDM10, MDM12 and MDM34.

Its subcellular location is the mitochondrion outer membrane. In terms of biological role, component of the ERMES/MDM complex, which serves as a molecular tether to connect the endoplasmic reticulum (ER) and mitochondria. Components of this complex are involved in the control of mitochondrial shape and protein biogenesis, and function in nonvesicular lipid trafficking between the ER and mitochondria. MDM34 is required for the interaction of the ER-resident membrane protein MMM1 and the outer mitochondrial membrane-resident beta-barrel protein MDM10. This is Mitochondrial distribution and morphology protein 34 from Paracoccidioides brasiliensis (strain Pb18).